Here is a 93-residue protein sequence, read N- to C-terminus: Small ribosomal subunit protein uS19 (93 aa).

The protein belongs to the universal ribosomal protein uS19 family.

Its function is as follows. Protein S19 forms a complex with S13 that binds strongly to the 16S ribosomal RNA. The sequence is that of Small ribosomal subunit protein uS19 from Arthrobacter sp. (strain FB24).